Consider the following 499-residue polypeptide: Glycerol kinase (499 aa).

T13 lines the ADP pocket. ATP-binding residues include T13, T14, and S15. T13 lines the sn-glycerol 3-phosphate pocket. R17 is a binding site for ADP. 4 residues coordinate sn-glycerol 3-phosphate: R83, E84, Y135, and D244. R83, E84, Y135, D244, and Q245 together coordinate glycerol. Positions 266 and 309 each coordinate ADP. Residues T266, G309, Q313, and G410 each contribute to the ATP site. G410 and N414 together coordinate ADP.

This sequence belongs to the FGGY kinase family.

It carries out the reaction glycerol + ATP = sn-glycerol 3-phosphate + ADP + H(+). It functions in the pathway polyol metabolism; glycerol degradation via glycerol kinase pathway; sn-glycerol 3-phosphate from glycerol: step 1/1. Inhibited by fructose 1,6-bisphosphate (FBP). In terms of biological role, key enzyme in the regulation of glycerol uptake and metabolism. Catalyzes the phosphorylation of glycerol to yield sn-glycerol 3-phosphate. This is Glycerol kinase from Paraburkholderia phytofirmans (strain DSM 17436 / LMG 22146 / PsJN) (Burkholderia phytofirmans).